The following is a 252-amino-acid chain: Thiamine thiazole synthase (252 aa).

Residues Ser35, 54-55, Gly62, Val126, and 152-154 each bind NAD(+); these read EK and HVD. 2 residues coordinate Fe cation: Asp154 and His169. Residue Met217 coordinates NAD(+). A glycine-binding site is contributed by Arg227.

Belongs to the THI4 family. Homooctamer; tetramer of dimers. It depends on Fe(2+) as a cofactor.

It catalyses the reaction hydrogen sulfide + glycine + NAD(+) = ADP-5-ethyl-4-methylthiazole-2-carboxylate + nicotinamide + 3 H2O + H(+). It participates in cofactor biosynthesis; thiamine diphosphate biosynthesis. Functionally, involved in the biosynthesis of the thiazole moiety of thiamine. Catalyzes the conversion of NAD and glycine to adenosine diphosphate 5-(2-hydroxyethyl)-4-methylthiazole-2-carboxylate (ADT), an adenylated thiazole intermediate, using free sulfide as a source of sulfur. This Pyrococcus abyssi (strain GE5 / Orsay) protein is Thiamine thiazole synthase.